The sequence spans 259 residues: Glutathione S-transferase domain-containing protein DDB_G0274705 (259 aa).

One can recognise a GST N-terminal domain in the interval 7–96 (KIDYIFYTNN…YLAQKFNTFL (90 aa)). Positions 102-232 (NPLENSEVIT…GFKNFNPSLL (131 aa)) constitute a GST C-terminal domain.

It belongs to the GST superfamily.

This is Glutathione S-transferase domain-containing protein DDB_G0274705 from Dictyostelium discoideum (Social amoeba).